The sequence spans 263 residues: Taurine import ATP-binding protein TauB (263 aa).

Residues 4 to 235 enclose the ABC transporter domain; the sequence is LTAEAISLSF…RYAAGETVRS (232 aa). 40–47 provides a ligand contact to ATP; it reads GPSGCGKS.

It belongs to the ABC transporter superfamily. Taurine importer (TC 3.A.1.17.1) family. As to quaternary structure, the complex is composed of two ATP-binding proteins (TauB), two transmembrane proteins (TauC) and a solute-binding protein (TauA).

It localises to the cell inner membrane. It catalyses the reaction taurine(out) + ATP + H2O = taurine(in) + ADP + phosphate + H(+). Its function is as follows. Part of the ABC transporter complex TauABC involved in taurine import. Responsible for energy coupling to the transport system. In Pseudomonas aeruginosa (strain ATCC 15692 / DSM 22644 / CIP 104116 / JCM 14847 / LMG 12228 / 1C / PRS 101 / PAO1), this protein is Taurine import ATP-binding protein TauB.